The chain runs to 468 residues: Ribulose bisphosphate carboxylase large chain (468 aa).

Lysine 5 carries the N6,N6,N6-trimethyllysine modification. Residues asparagine 114 and threonine 164 each contribute to the substrate site. Catalysis depends on lysine 166, which acts as the Proton acceptor. Lysine 168 is a binding site for substrate. Positions 192, 194, and 195 each coordinate Mg(2+). At lysine 192 the chain carries N6-carboxylysine. The active-site Proton acceptor is histidine 285. Arginine 286, histidine 318, and serine 370 together coordinate substrate.

The protein belongs to the RuBisCO large chain family. Type I subfamily. Heterohexadecamer of 8 large chains and 8 small chains; disulfide-linked. The disulfide link is formed within the large subunit homodimers. Requires Mg(2+) as cofactor. Post-translationally, the disulfide bond which can form in the large chain dimeric partners within the hexadecamer appears to be associated with oxidative stress and protein turnover.

Its subcellular location is the plastid. The protein resides in the chloroplast. The catalysed reaction is 2 (2R)-3-phosphoglycerate + 2 H(+) = D-ribulose 1,5-bisphosphate + CO2 + H2O. The enzyme catalyses D-ribulose 1,5-bisphosphate + O2 = 2-phosphoglycolate + (2R)-3-phosphoglycerate + 2 H(+). RuBisCO catalyzes two reactions: the carboxylation of D-ribulose 1,5-bisphosphate, the primary event in carbon dioxide fixation, as well as the oxidative fragmentation of the pentose substrate in the photorespiration process. Both reactions occur simultaneously and in competition at the same active site. The chain is Ribulose bisphosphate carboxylase large chain from Anthocercis viscosa (Sticky tailflower).